We begin with the raw amino-acid sequence, 146 residues long: Hut operon positive regulatory protein (146 aa).

This sequence belongs to the HutP family. As to quaternary structure, homohexamer.

In terms of biological role, antiterminator that binds to cis-acting regulatory sequences on the mRNA in the presence of histidine, thereby suppressing transcription termination and activating the hut operon for histidine utilization. The polypeptide is Hut operon positive regulatory protein (Bacillus mycoides (strain KBAB4) (Bacillus weihenstephanensis)).